Here is a 655-residue protein sequence, read N- to C-terminus: uncharacterized protein (655 aa).

The 225-residue stretch at 245–469 (PGVIAQALFT…NLKVIVNLGY (225 aa)) folds into the PE-PPE domain.

This sequence belongs to the mycobacterial PPE family.

This is an uncharacterized protein from Mycobacterium tuberculosis (strain ATCC 25618 / H37Rv).